Here is a 142-residue protein sequence, read N- to C-terminus: Large ribosomal subunit protein uL13 (142 aa).

This sequence belongs to the universal ribosomal protein uL13 family. In terms of assembly, part of the 50S ribosomal subunit.

This protein is one of the early assembly proteins of the 50S ribosomal subunit, although it is not seen to bind rRNA by itself. It is important during the early stages of 50S assembly. The sequence is that of Large ribosomal subunit protein uL13 from Pseudomonas putida (strain W619).